The sequence spans 233 residues: MSTESMIRDVELAEEALPKKTGGPQGSRRCLFLSLFSFLIVAGATTLFCLLHFGVIGPQREEFPRDLSLISPLAQAVRSSSRTPSDKPVAHVVANPQAEGQLQWLNRRANALLANGVELRDNQLVVPSEGLYLIYSQVLFKGQGCPSTHVLLTHTISRIAVSYQTKVNLLSAIKSPCQRETPEGAEAKPWYEPIYLGGVFQLEKGDRLSAEINRPDYLDFAESGQVYFGIIAL.

The Cytoplasmic segment spans residues 1-35 (MSTESMIRDVELAEEALPKKTGGPQGSRRCLFLSL). A Phosphoserine; by CK1 modification is found at serine 2. Residues lysine 19 and lysine 20 are each lipidated (N6-myristoyl lysine). The chain crosses the membrane as a helical; Signal-anchor for type II membrane protein span at residues 36-56 (FSFLIVAGATTLFCLLHFGVI). At 57 to 233 (GPQREEFPRD…GQVYFGIIAL (177 aa)) the chain is on the extracellular side. Serine 80 is a glycosylation site (O-linked (GalNAc...) serine; in soluble form). Residues 88–233 (PVAHVVANPQ…GQVYFGIIAL (146 aa)) enclose the THD domain. Cysteine 145 and cysteine 177 form a disulfide bridge.

Belongs to the tumor necrosis factor family. In terms of assembly, homotrimer. Interacts with SPPL2B. The soluble form derives from the membrane form by proteolytic processing. The membrane-bound form is further proteolytically processed by SPPL2A or SPPL2B through regulated intramembrane proteolysis producing TNF intracellular domains (ICD1 and ICD2) released in the cytosol and TNF C-domain 1 and C-domain 2 secreted into the extracellular space. Post-translationally, the membrane form, but not the soluble form, is phosphorylated on serine residues. Dephosphorylation of the membrane form occurs by binding to soluble TNFRSF1A/TNFR1. In terms of processing, O-glycosylated; glycans contain galactose, N-acetylgalactosamine and N-acetylneuraminic acid. The soluble form is demyristoylated at Lys-19 and Lys-20 by SIRT6, promoting its secretion.

The protein resides in the cell membrane. Its subcellular location is the membrane. It is found in the secreted. Its function is as follows. Cytokine that binds to TNFRSF1A/TNFR1 and TNFRSF1B/TNFBR. It is mainly secreted by macrophages and can induce cell death of certain tumor cell lines. It is potent pyrogen causing fever by direct action or by stimulation of interleukin-1 secretion and is implicated in the induction of cachexia, Under certain conditions it can stimulate cell proliferation and induce cell differentiation. Impairs regulatory T-cells (Treg) function in individuals with rheumatoid arthritis via FOXP3 dephosphorylation. Up-regulates the expression of protein phosphatase 1 (PP1), which dephosphorylates the key 'Ser-418' residue of FOXP3, thereby inactivating FOXP3 and rendering Treg cells functionally defective. Key mediator of cell death in the anticancer action of BCG-stimulated neutrophils in combination with DIABLO/SMAC mimetic in the RT4v6 bladder cancer cell line. Induces insulin resistance in adipocytes via inhibition of insulin-induced IRS1 tyrosine phosphorylation and insulin-induced glucose uptake. Induces GKAP42 protein degradation in adipocytes which is partially responsible for TNF-induced insulin resistance. Plays a role in angiogenesis by inducing VEGF production synergistically with IL1B and IL6. Promotes osteoclastogenesis and therefore mediates bone resorption. The TNF intracellular domain (ICD) form induces IL12 production in dendritic cells. The sequence is that of Tumor necrosis factor (TNF) from Homo sapiens (Human).